The following is a 217-amino-acid chain: Melanocortin-2 receptor accessory protein 2A (217 aa).

Asn8 is a glycosylation site (N-linked (GlcNAc...) asparagine). The helical transmembrane segment at 42-62 threads the bilayer; that stretch reads IVIGFWVGLAVFVIFMFFVLT.

It belongs to the MRAP family. Interacts with mc4r.

The protein localises to the cell membrane. The protein resides in the endoplasmic reticulum membrane. Functionally, inhibitor of melanocortin receptor 4 (mc4r), a receptor involved in energy homeostasis. Plays a role during larval development in the control of energy homeostasis and body weight regulation by decreasing ligand-sensitivity of mc4r and mc4r-mediated generation of cAMP, leading to stimulate growth during larval development. Acts by stabilizing an inactive conformation of mc4r during embryonic development, when all the energy consumed is obtained from the yolk sac, possibly to speed the rapid maturation to the mobile free-feeding juvenile stage reached at 5 dpf. The protein is Melanocortin-2 receptor accessory protein 2A (mrap2a) of Danio rerio (Zebrafish).